A 90-amino-acid chain; its full sequence is Acylphosphatase (90 aa).

The Acylphosphatase-like domain maps to 5-90 (CERFIVKGHV…YKPFRGFKIL (86 aa)). Residues Arg20 and Asn38 contribute to the active site.

The protein belongs to the acylphosphatase family.

The catalysed reaction is an acyl phosphate + H2O = a carboxylate + phosphate + H(+). This is Acylphosphatase (acyP) from Vibrio parahaemolyticus serotype O3:K6 (strain RIMD 2210633).